Here is a 481-residue protein sequence, read N- to C-terminus: Glycogen synthase (481 aa).

Residue Lys-15 participates in ADP-alpha-D-glucose binding.

The protein belongs to the glycosyltransferase 1 family. Bacterial/plant glycogen synthase subfamily.

The enzyme catalyses [(1-&gt;4)-alpha-D-glucosyl](n) + ADP-alpha-D-glucose = [(1-&gt;4)-alpha-D-glucosyl](n+1) + ADP + H(+). Its pathway is glycan biosynthesis; glycogen biosynthesis. Functionally, synthesizes alpha-1,4-glucan chains using ADP-glucose. This chain is Glycogen synthase, found in Thermosipho melanesiensis (strain DSM 12029 / CIP 104789 / BI429).